Consider the following 739-residue polypeptide: Endoglucanase F (739 aa).

The N-terminal stretch at 1-27 is a signal peptide; that stretch reads MKKILAFLLTVALVAVVAIPQAVVSFA. The catalytic stretch occupies residues 28–470; it reads ADFNYGEALQ…AKMYEKYGGE (443 aa). Catalysis depends on D84, which acts as the Nucleophile. Residues H400, D438, and E447 contribute to the active site. Residues 480–639 form the CBM3 domain; that stretch reads TPGEEFYVEA…NVRVWGKVPD (160 aa). In terms of domain architecture, Dockerin spans 664–737; that stretch reads PGIMLGDVNF…ILKLIEKFPA (74 aa).

Belongs to the glycosyl hydrolase 9 (cellulase E) family. It depends on Ca(2+) as a cofactor.

It carries out the reaction Endohydrolysis of (1-&gt;4)-beta-D-glucosidic linkages in cellulose, lichenin and cereal beta-D-glucans.. Its function is as follows. This enzyme catalyzes the endohydrolysis of 1,4-beta-glucosidic linkages in cellulose, lichenin and cereal beta-D-glucans. The sequence is that of Endoglucanase F (celF) from Acetivibrio thermocellus (strain ATCC 27405 / DSM 1237 / JCM 9322 / NBRC 103400 / NCIMB 10682 / NRRL B-4536 / VPI 7372) (Clostridium thermocellum).